Reading from the N-terminus, the 600-residue chain is Phosphoenolpyruvate carboxykinase (ATP) (600 aa).

302–309 (GLSGTGKT) is a binding site for ATP.

Belongs to the phosphoenolpyruvate carboxykinase (ATP) family.

It catalyses the reaction oxaloacetate + ATP = phosphoenolpyruvate + ADP + CO2. It participates in carbohydrate biosynthesis; gluconeogenesis. The sequence is that of Phosphoenolpyruvate carboxykinase (ATP) (acuF) from Emericella nidulans (strain FGSC A4 / ATCC 38163 / CBS 112.46 / NRRL 194 / M139) (Aspergillus nidulans).